The primary structure comprises 361 residues: Probable cadicidin biosynthesis thioesterase (361 aa).

Positions 2-29 (RVTVDSEQCVGAGQCVLNAPEVFDQDDD) constitute a 4Fe-4S ferredoxin-type domain. The interval 36–110 (RADPTSGTTR…RRDSPVTTAD (75 aa)) is disordered. Residues 46–61 (RSARRATCARRPRSSS) are compositionally biased toward basic residues. Basic and acidic residues-rich tracts occupy residues 62–74 (RRTE…DRHR) and 94–104 (TDRRQNHRRDS). Residue S201 is part of the active site.

The protein belongs to the thioesterase family.

The protein operates within antibiotic biosynthesis; candicidin biosynthesis. Its function is as follows. Probable thioesterase involved in the biosynthesis of candicidin. Could release the macrolide ring from the polyketide synthase. This Streptomyces griseus protein is Probable cadicidin biosynthesis thioesterase.